A 208-amino-acid polypeptide reads, in one-letter code: Vacuolar ATPase assembly protein VMA12 (208 aa).

At Ala2 the chain carries N-acetylalanine. 2 helical membrane-spanning segments follow: residues 146 to 166 (LVIT…CTYL) and 179 to 199 (VLAA…VMVR).

Accessory component of the multisubunit proton-transporting vacuolar (V)-ATPase protein pump.

It is found in the cytoplasmic vesicle. Its subcellular location is the COPI-coated vesicle membrane. It localises to the endoplasmic reticulum-Golgi intermediate compartment membrane. The protein resides in the endoplasmic reticulum membrane. Functionally, accessory component of the proton-transporting vacuolar (V)-ATPase protein pump involved in intracellular iron homeostasis. In aerobic conditions, required for intracellular iron homeostasis, thus triggering the activity of Fe(2+) prolyl hydroxylase (PHD) enzymes, and leading to HIF1A hydroxylation and subsequent proteasomal degradation. Necessary for endolysosomal acidification and lysosomal degradation. May be involved in Golgi homeostasis. Binds 20(S)-hydroxycholesterol (20(S)-OHC). The protein is Vacuolar ATPase assembly protein VMA12 of Homo sapiens (Human).